Consider the following 325-residue polypeptide: Phospholipid phosphatase-related protein type 1 (325 aa).

3 consecutive transmembrane segments (helical) span residues 11-31 (YSII…TVLL), 67-87 (FISP…IIFI), and 127-147 (FIGV…AGQV). N-linked (GlcNAc...) asparagine glycosylation occurs at Asn163. 3 consecutive transmembrane segments (helical) span residues 201–218 (AALS…ITST), 230–247 (VLCL…LNRV), and 257–277 (VIGG…CVVH). Asn316 is a glycosylation site (N-linked (GlcNAc...) asparagine).

The protein belongs to the PA-phosphatase related phosphoesterase family.

It localises to the cell membrane. Its subcellular location is the cell projection. It is found in the neuron projection. In terms of biological role, may play a role in neurite outgrowth and neurogenesis. This is Phospholipid phosphatase-related protein type 1 from Xenopus tropicalis (Western clawed frog).